The sequence spans 366 residues: Nucleoporin SEH1 (366 aa).

WD repeat units follow at residues 18–57 (AHRD…NWRR), 63–104 (CHGG…TEKD), 111–152 (QWIR…RIYE), 161–209 (RWNL…VIYE), 226–267 (DMPC…TAIL), and 290–329 (GDQR…QWVK).

This sequence belongs to the WD repeat SEC13 family. As to quaternary structure, component of the nuclear pore complex (NPC). Probably part of the GATOR complex.

The protein localises to the nucleus. Its subcellular location is the nuclear pore complex. It is found in the lysosome membrane. In terms of biological role, probable component of the nuclear pore complex (NPC) which is involved in the trafficking of macromolecules between the cytoplasm and nucleus. Its function is as follows. As a component of the GATOR complex may function in the amino acid-sensing branch of the TORC1 signaling pathway. This chain is Nucleoporin SEH1, found in Caenorhabditis briggsae.